A 156-amino-acid chain; its full sequence is MEKTFPMTKEGLDKLKAELENLKLVKRPEVIDRIKVARSYGDLSENSEYEAAKDEQAFIEGRISTVETMIRYAEIVDNAKIAKDEVALGKNVTFVEVGETDEESYQIVGTAEADPFTGKISNESPIARVLIGKKVGDIVDVPLPVGEMTVKIVKVD.

Residues 2–27 (EKTFPMTKEGLDKLKAELENLKLVKR) adopt a coiled-coil conformation.

The protein belongs to the GreA/GreB family.

In terms of biological role, necessary for efficient RNA polymerase transcription elongation past template-encoded arresting sites. The arresting sites in DNA have the property of trapping a certain fraction of elongating RNA polymerases that pass through, resulting in locked ternary complexes. Cleavage of the nascent transcript by cleavage factors such as GreA or GreB allows the resumption of elongation from the new 3'terminus. GreA releases sequences of 2 to 3 nucleotides. This is Transcription elongation factor GreA from Lactococcus lactis subsp. cremoris (strain MG1363).